Reading from the N-terminus, the 600-residue chain is MNSPGGRNDKKKPVTPAAETGPGSPTTPPSTETQVVLAPPSPHKRNLHLFSYPLLAVFSLLRFLAFQLGLLFVWCCELLSRSVMADKGRTVASTAAAQDRPQEPEVVRSYHQQAFQYISLALRVDEEEKDQKEQAVQWYKKGIEELEKGIAVPISGKGEQYDRARRLQAKMSTNLIMAKDRLQLLAKLQADIQGPHSQMEVCSDNTNLPCRNGLLKPEKGAVPKKKDPPPITSNSYSRTKAPPKSGSLGNRIPNCTSVPTSARQAGAHTPSNRGATGKNNTRTNKPATPTTAVRKKDMKNLRNVDSNLANLILNEIVDSGPSVKFADIAGQDLAKQALQEIVILPSIRPELFTGLRAPARGLLLFGPPGNGKTMLAKAVAAESNATFFNISAASLTSKYVGEGEKLVRALFSVARELQPSIIFIDEVDSLLCERREGEHDASRRLKTEFLIEFDGVQSGGDDRVLVMGATNRPQELDDAVLRRFTKRVYVALPNEETRLVLLKNLLSKQGNPLSEKELTQLSRLTEGYSGSDITALAKDAALGPIRELKPEQVKNMAASEMRNMKYSDFLGSLKKIKCSVSHSTLESYIRWNQDFGDTTV.

The disordered stretch occupies residues 1-39 (MNSPGGRNDKKKPVTPAAETGPGSPTTPPSTETQVVLAP). Residues 1–53 (MNSPGGRNDKKKPVTPAAETGPGSPTTPPSTETQVVLAPPSPHKRNLHLFSYP) lie on the Cytoplasmic side of the membrane. Residues 15-33 (TPAAETGPGSPTTPPSTET) show a composition bias toward low complexity. Residues 54–74 (LLAVFSLLRFLAFQLGLLFVW) constitute an intramembrane region (helical). Residues 75–600 (CCELLSRSVM…WNQDFGDTTV (526 aa)) are Cytoplasmic-facing. Positions 110-185 (YHQQAFQYIS…IMAKDRLQLL (76 aa)) constitute an MIT domain. Residues 213 to 294 (GLLKPEKGAV…KPATPTTAVR (82 aa)) form a disordered region. Basic and acidic residues predominate over residues 216–228 (KPEKGAVPKKKDP). Over residues 253–291 (PNCTSVPTSARQAGAHTPSNRGATGKNNTRTNKPATPTT) the composition is skewed to polar residues. Residue 366 to 373 (GPPGNGKT) participates in ATP binding.

The protein belongs to the AAA ATPase family. Spastin subfamily. In terms of assembly, homohexamer. The homohexamer is stabilized by ATP-binding. The homohexamer may adopt a ring conformation through which microtubules pass prior to being severed. Interacts with microtubules.

The protein resides in the membrane. Its subcellular location is the cytoplasm. It is found in the cytoskeleton. The protein localises to the microtubule organizing center. It localises to the centrosome. The protein resides in the perinuclear region. Its subcellular location is the nucleus. It catalyses the reaction n ATP + n H2O + a microtubule = n ADP + n phosphate + (n+1) alpha/beta tubulin heterodimers.. Its function is as follows. ATP-dependent microtubule severing protein that specifically recognizes and cuts microtubules that are polyglutamylated. Preferentially recognizes and acts on microtubules decorated with short polyglutamate tails: severing activity increases as the number of glutamates per tubulin rises from one to eight, but decreases beyond this glutamylation threshold. Microtubule severing promotes reorganization of cellular microtubule arrays and the release of microtubules from the centrosome following nucleation. Required for membrane traffic from the endoplasmic reticulum (ER) to the Golgi and for completion of the abscission stage of cytokinesis. Also plays a role in axon growth and the formation of axonal branches. The chain is Spastin from Xenopus laevis (African clawed frog).